An 876-amino-acid polypeptide reads, in one-letter code: Exosome complex component 10 homolog (876 aa).

The segment at 1–22 (MSGEESMPDEEQKQSEEEEEMI) is disordered. Residues 279–445 (TMIDTKEKLE…YSYDMLREQL (167 aa)) form the 3'-5' exonuclease domain. Asp-303, Glu-305, Asp-361, and Asp-430 together coordinate Mg(2+). An HRDC domain is found at 489 to 569 (NTRQDYALTH…VEARDVKLEK (81 aa)). 3 stretches are compositionally biased toward basic and acidic residues: residues 690–730 (EKQE…EFDA), 741–752 (VPDDPNKPKDPE), and 834–847 (KPVRDNNADFDPFH). The tract at residues 690–876 (EKQEEEERKE…NRQGTINYKK (187 aa)) is disordered. A compositionally biased stretch (basic residues) spans 848–861 (QKYRLKNKTKKNMA).

The protein belongs to the exosome component 10/RRP6 family. As to quaternary structure, component of the RNA exosome complex. Interacts with crn-5. Mg(2+) is required as a cofactor. As to expression, ubiquitously expressed.

Its subcellular location is the nucleus. It localises to the nucleolus. The protein localises to the nucleoplasm. Its function is as follows. Catalytic component of the RNA exosome complex which has 3'-&gt;5' exoribonuclease activity and participates in a multitude of cellular RNA processing and degradation events. Involved in apoptotic DNA degradation. Involved in regulation of antisense ribosomal siRNA production. Involved in response to cold-warm shock. The chain is Exosome complex component 10 homolog from Caenorhabditis elegans.